The following is a 75-amino-acid chain: DNA-directed RNA polymerase subunit omega (75 aa).

It belongs to the RNA polymerase subunit omega family. In terms of assembly, the RNAP catalytic core consists of 2 alpha, 1 beta, 1 beta' and 1 omega subunit. When a sigma factor is associated with the core the holoenzyme is formed, which can initiate transcription.

It carries out the reaction RNA(n) + a ribonucleoside 5'-triphosphate = RNA(n+1) + diphosphate. Its function is as follows. Promotes RNA polymerase assembly. Latches the N- and C-terminal regions of the beta' subunit thereby facilitating its interaction with the beta and alpha subunits. In Thermosipho melanesiensis (strain DSM 12029 / CIP 104789 / BI429), this protein is DNA-directed RNA polymerase subunit omega.